A 151-amino-acid chain; its full sequence is Ribosome-binding factor A (151 aa).

The disordered stretch occupies residues 116–151 (DAEVARAAANARPAGDPDPYREPRPADDDDEDDEDE). The segment covering 120–129 (ARAAANARPA) has biased composition (low complexity). A compositionally biased stretch (acidic residues) spans 142–151 (DDDDEDDEDE).

It belongs to the RbfA family. Monomer. Binds 30S ribosomal subunits, but not 50S ribosomal subunits or 70S ribosomes.

It is found in the cytoplasm. In terms of biological role, one of several proteins that assist in the late maturation steps of the functional core of the 30S ribosomal subunit. Associates with free 30S ribosomal subunits (but not with 30S subunits that are part of 70S ribosomes or polysomes). Required for efficient processing of 16S rRNA. May interact with the 5'-terminal helix region of 16S rRNA. In Thermobifida fusca (strain YX), this protein is Ribosome-binding factor A.